The chain runs to 423 residues: Putative UPF0496 protein 5 (423 aa).

Positions 1–14 (MGNRHGIMRPRRLA) are enriched in basic residues. Residues 1-37 (MGNRHGIMRPRRLASGRSAAEEEEDGEGEPGSYEAAC) form a disordered region. 2 helical membrane passes run 224–244 (IVFL…AAIA) and 247–267 (PVAA…GKWM).

Belongs to the UPF0496 family.

The protein resides in the membrane. The polypeptide is Putative UPF0496 protein 5 (Oryza sativa subsp. japonica (Rice)).